The following is a 32-amino-acid chain: Calcitonin (32 aa).

A disulfide bond links C1 and C7. P32 carries the proline amide modification.

It belongs to the calcitonin family.

It localises to the secreted. Calcitonin is a peptide hormone that causes a rapid but short-lived drop in the level of calcium and phosphate in blood by promoting the incorporation of those ions in the bones. Calcitonin function is mediated by the calcitonin receptor/CALCR and the CALCR-RAMP2 (AMYR2) receptor complex. In Bos taurus (Bovine), this protein is Calcitonin (CALCA).